Reading from the N-terminus, the 308-residue chain is Protein translocase subunit SecF (308 aa).

The next 6 helical transmembrane spans lie at 14-34 (FFLL…LFGF), 134-154 (VYAV…RFEF), 158-178 (ISGI…FALL), 185-205 (TFVA…IVIF), 238-258 (SIRT…FGGI), and 267-287 (LIIG…PIWV).

Belongs to the SecD/SecF family. SecF subfamily. As to quaternary structure, forms a complex with SecD. Part of the essential Sec protein translocation apparatus which comprises SecA, SecYEG and auxiliary proteins SecDF. Other proteins may also be involved.

Its subcellular location is the cell membrane. Functionally, part of the Sec protein translocase complex. Interacts with the SecYEG preprotein conducting channel. SecDF uses the proton motive force (PMF) to complete protein translocation after the ATP-dependent function of SecA. In Alicyclobacillus acidocaldarius subsp. acidocaldarius (strain ATCC 27009 / DSM 446 / BCRC 14685 / JCM 5260 / KCTC 1825 / NBRC 15652 / NCIMB 11725 / NRRL B-14509 / 104-IA) (Bacillus acidocaldarius), this protein is Protein translocase subunit SecF.